The sequence spans 595 residues: Coronatine-insensitive protein homolog 1a (595 aa).

The F-box domain maps to 20 to 62 (WVPDEALHLVMGHVEDPRDREAASRVCRRWHRIDALTRKHVTV). The jasmonate site is built by Arg-90, Arg-351, Tyr-389, Arg-412, and Arg-499.

As to quaternary structure, interacts with TIFY6A/JAZ3, TIFY6B/JAZ4 and TIFY11D/JAZ12 in a coronatine-dependent manner. Interacts with TIFY9/JAZ5, TIFY10A/JAZ6, TIFY10B/JAZ7, TIFY11A/JAZ9 and TIFY11C/JAZ11 in a coronatine-dependent manner.

In terms of biological role, involved in jasmonate (JA) signaling. Required for jasmonate signaling in plant defense responses. Can complement Arabidopsis coi1-1 mutant and restore jasmonate signaling. Required for JA-regulated defense responses to infestation by the leaffolder Cnaphalocrocis medinalis. May act on an initial response of jasmonate-regulated gene expression toward drought tolerance as part of a BHLH148-TIFY11D/JAZ12-COI1A complex. Component of SCF(COI1) E3 ubiquitin ligase complexes, which may mediate the ubiquitination and subsequent proteasomal degradation of target proteins, including TIFY/JAZ family. The sequence is that of Coronatine-insensitive protein homolog 1a from Oryza sativa subsp. indica (Rice).